We begin with the raw amino-acid sequence, 125 residues long: Dirigent protein 22 (125 aa).

Residues N8, N30, and N65 are each glycosylated (N-linked (GlcNAc...) asparagine).

Belongs to the plant dirigent protein family. As to quaternary structure, homodimer.

It localises to the secreted. It is found in the extracellular space. The protein localises to the apoplast. Its function is as follows. Dirigent proteins impart stereoselectivity on the phenoxy radical-coupling reaction, yielding optically active lignans from two molecules of coniferyl alcohol in the biosynthesis of lignans, flavonolignans, and alkaloids and thus plays a central role in plant secondary metabolism. This is Dirigent protein 22 (DIR22) from Arabidopsis thaliana (Mouse-ear cress).